The primary structure comprises 428 residues: Aminotransferase verI (428 aa).

Lysine 254 is subject to N6-(pyridoxal phosphate)lysine.

This sequence belongs to the class-I pyridoxal-phosphate-dependent aminotransferase family. Pyridoxal 5'-phosphate serves as cofactor.

Its pathway is mycotoxin biosynthesis. Functionally, aminotransferase; part of the gene cluster that mediates the biosynthesis of 11'-deoxyverticillin A, one of the dimeric epipolythiodioxopiperazines (ETPs) from the verticillin family that act as mycotoxins. 11'-deoxyverticillin A is required for normal conidiation. The nonribosomal peptide synthetase verP is speculated to be responsible for condensation of amino acids to form the carbon skeleton of verticillin, whereas the cluster-specific tailoring enzymes are involved in further modifications leading to the production of 11'-deoxyverticillin A. The chain is Aminotransferase verI from Clonostachys rogersoniana.